Consider the following 248-residue polypeptide: MNAVIVIPARLSSSRLKEKMLADLEGEPLIVRTWQQATKSRLASRVVVATDSERIFAVLREAGAEVVMTSPDLTCGTDRIAEAAEQVGGDVFVNLQGDEPLIDPATIDLAIAPFFGEGPLPDCTTLVFPLKPDERQIIDDPHVVKAVLDTRGNALYFSRSPIPYRRETLPDTKYYRHIGLYAFRADVLKAFVALPPSMLERAESLEQLRLLENGYRIRCIETTTDTPGVNTEEELEEVRRLFRERFGA.

Belongs to the KdsB family.

It localises to the cytoplasm. The enzyme catalyses 3-deoxy-alpha-D-manno-oct-2-ulosonate + CTP = CMP-3-deoxy-beta-D-manno-octulosonate + diphosphate. The protein operates within nucleotide-sugar biosynthesis; CMP-3-deoxy-D-manno-octulosonate biosynthesis; CMP-3-deoxy-D-manno-octulosonate from 3-deoxy-D-manno-octulosonate and CTP: step 1/1. It participates in bacterial outer membrane biogenesis; lipopolysaccharide biosynthesis. Activates KDO (a required 8-carbon sugar) for incorporation into bacterial lipopolysaccharide in Gram-negative bacteria. In Chlorobaculum tepidum (strain ATCC 49652 / DSM 12025 / NBRC 103806 / TLS) (Chlorobium tepidum), this protein is 3-deoxy-manno-octulosonate cytidylyltransferase.